A 196-amino-acid chain; its full sequence is Imidazoleglycerol-phosphate dehydratase (196 aa).

This sequence belongs to the imidazoleglycerol-phosphate dehydratase family.

Its subcellular location is the cytoplasm. It carries out the reaction D-erythro-1-(imidazol-4-yl)glycerol 3-phosphate = 3-(imidazol-4-yl)-2-oxopropyl phosphate + H2O. It functions in the pathway amino-acid biosynthesis; L-histidine biosynthesis; L-histidine from 5-phospho-alpha-D-ribose 1-diphosphate: step 6/9. The sequence is that of Imidazoleglycerol-phosphate dehydratase from Clostridium botulinum (strain Langeland / NCTC 10281 / Type F).